The chain runs to 107 residues: Quaternary ammonium compound-resistance protein QacH (107 aa).

4 consecutive transmembrane segments (helical) span residues Met-1–Lys-21, Phe-26–Leu-46, Ile-57–Ile-77, and Leu-84–Gly-104.

Belongs to the drug/metabolite transporter (DMT) superfamily. Small multidrug resistance (SMR) (TC 2.A.7.1) family.

It localises to the cell membrane. Multidrug exporter. Is implicated for the resistance to bacteriocidal quaternary ammonium compounds. This is Quaternary ammonium compound-resistance protein QacH (qacH) from Staphylococcus saprophyticus.